The chain runs to 651 residues: MIEIVNVTKTYRIGESSVKALDGVSLTIGQGEFVAIMGASGSGKSTLMHILGLLDVPDTGQYRLMGKEVSRMSDDELAGIRNNVAGFVFQQFHLLSRMSTIDNVVLPCIYSGQRGDFRKDALKRLEMVGLAQRSDHRPNQMSGGEQQRVAIARALIRDPMLIFADEPTGNLDTKNSHEIMRILTDLHRQGKTIIMVTHETDIAEFADRVITMKDGVVVDDRKKQDARLNPQMPQGGMEAAHSALFQPSRLLGFVVQAFQSIASNKIRTFLSVLGILVGVASVIAMMALGTGAKASMEEQLKSMGSNLLSVRGGSAKIGGASQGFGTVTRFTEKDAAAIQAIPNLIDHVSGDVTGSGQLVYLDKNWSTSVEGVDYDYGEMRAAIPTVGRWFTREEIQERAKVAILGTTVAMQLFGDADPVDKIIKINRINFRVIGVAPAKGFAGPRDQDDVVYIPVSTAMYRVLGKLYLDGIYVEVSSAENIAPATQAIDALIRKRHKLAADDQDSFNIRDMTQFQQMLSATTQTMSMLLGSIAAISLVVGGIGIMNIMLVSVTERTREIGLRKAIGARKGDIMLQFLIESVGMTLSGGIIGIVVGVGVSVMLSAFAGWAVKTSMFSVVLATGFSVLIGLFFGLWPARKAAALKPVEALRYE.

The ABC transporter domain occupies 2-239; it reads IEIVNVTKTY…PQMPQGGMEA (238 aa). 38 to 45 contributes to the ATP binding site; the sequence is GASGSGKS. A run of 4 helical transmembrane segments spans residues 269-289, 532-552, 589-609, and 614-634; these read FLSV…MALG, IAAI…LVSV, IIGI…AGWA, and MFSV…FGLW.

It belongs to the ABC transporter superfamily. Macrolide exporter (TC 3.A.1.122) family. In terms of assembly, homodimer.

The protein localises to the cell inner membrane. Its function is as follows. Non-canonical ABC transporter that contains transmembrane domains (TMD), which form a pore in the inner membrane, and an ATP-binding domain (NBD), which is responsible for energy generation. Confers resistance against macrolides. The chain is Macrolide export ATP-binding/permease protein MacB from Chlorobaculum tepidum (strain ATCC 49652 / DSM 12025 / NBRC 103806 / TLS) (Chlorobium tepidum).